Reading from the N-terminus, the 1018-residue chain is MKMWLLFSLLVIISFKTCLSEFTWHRRYGHGVSEEDKGFGPIFEEQPINTIYPEESPEGKVSLNCRARASPFPVYKWRMNNGDIDLTSDRYSMVGGNLVINNPDKQKDAGIYYCLASNNYGMVRSTEATLSFGYLDPFPPEERPEVRVKEGKGMVLLCDPPYHFPDDLSYRWLLNEFPVFITMDKRRFVSQTNGNLYIANVEASDKGNYSCFVSSPSITKSVFSKFIPLIPLPERTTKPYPADIVVQFKDVYALMGQNVTLECFALGNPVPDIRWRKVLEPMPSTAEISTSGAVLKIFNIQLEDEGIYECEAENNRGKDKHQARIYVQAFPEWVEHINDTEVDIGSDLYWPCVATGKPIPTIRWLKNGYSYHRGELRLYDVTFENAGMYQCIAENTHGAIYANAELKILALAPTFEMNPMKKKILAAKGGRVIIECKPKAAPKPTFLWSKGTERLVNSSRILIWEDGSLEINNITRSDGGVYTCFVENNKGKANSTGTLVITDPTRIILAPINADITVGENATMQCAASFDPALDLTFVWSFNGYVIDFNKENIHYQRNFMLDSNGELLIRNAQLKHAGRYTCTAQTIVDNSSASADLVVRGPPGPPGGLRIEDIRATSVALTWSRGSDNHSPISKYTIQTKTILSDDWKDAKTDPPIIEGNMEAARAVDLIPWMEYEFRVVATNTLGIGEPSIPSNKIKTDGAAPNVAPSDVGGGGGSNRELTITWAPLSREYHYFNNFGYIVAFKPFDGEEWKKVTVTNPDTGRYVHKDETMRPSTAFQVKVKAFNNKGDGPYSLTAVIHSAQDAPSEAPTAVGVKVLSSSEISVHWEHVVEKIVESYQIRYWASHDKEAAAHRVQVASQEYSARLENLLPDTQYFVEVRACNSAGCGPPSDMTETFTKKAPPSQPPRIISSVRSGSRYIITWDHVVALSNESTVTGYKVLYRPDGQHDGKLYSTHKHSIEVPIPRDGEYVVEVRAHSDGGDGVVSQVKISGASILSPCLLGFLLPALGILVYLEF.

An N-terminal signal peptide occupies residues 1-20 (MKMWLLFSLLVIISFKTCLS). Ig-like C2-type domains are found at residues 41 to 131 (PIFE…ATLS), 137 to 223 (PFPP…KSVF), 241 to 326 (PADI…ARIY), 331 to 407 (PEWV…AELK), 413 to 500 (PTFE…GTLV), and 504 to 601 (PTRI…LVVR). Cystine bridges form between Cys65–Cys114 and Cys158–Cys211. N-linked (GlcNAc...) asparagine glycosylation is found at Asn208 and Asn258. Cys263 and Cys310 form a disulfide bridge. Asn338 carries an N-linked (GlcNAc...) asparagine glycan. 2 disulfides stabilise this stretch: Cys352-Cys391 and Cys436-Cys484. N-linked (GlcNAc...) asparagine glycans are attached at residues Asn457, Asn473, Asn494, and Asn521. The cysteines at positions 526 and 583 are disulfide-linked. Asn591 carries N-linked (GlcNAc...) asparagine glycosylation. 4 Fibronectin type-III domains span residues 606-704 (PPGG…TDGA), 709-806 (APSD…SAQD), 811-906 (APTA…APPS), and 907-1000 (QPPR…ILSP). Disordered regions lie at residues 698-718 (KIKTDGAAPNVAPSDVGGGGG) and 891-910 (PPSDMTETFTKKAPPSQPPR). The GPI-anchor amidated serine moiety is linked to residue Ser999. Positions 1000 to 1018 (PCLLGFLLPALGILVYLEF) are cleaved as a propeptide — removed in mature form.

The protein belongs to the immunoglobulin superfamily. Contactin family. As to quaternary structure, monomer. Interacts with CNTNAP1 in cis form. Binds to the carbonic-anhydrase like domain of PTPRZ1. Interacts with NOTCH1 and TNR. Detected in a complex with NRCAM and PTPRB. Interacts with TASOR.

The protein localises to the cell membrane. Contactins mediate cell surface interactions during nervous system development. Involved in the formation of paranodal axo-glial junctions in myelinated peripheral nerves and in the signaling between axons and myelinating glial cells via its association with CNTNAP1. Participates in oligodendrocytes generation by acting as a ligand of NOTCH1. Its association with NOTCH1 promotes NOTCH1 activation through the released notch intracellular domain (NICD) and subsequent translocation to the nucleus. Interaction with TNR induces a repulsion of neurons and an inhibition of neurite outgrowth. This chain is Contactin-1 (CNTN1), found in Bos taurus (Bovine).